Reading from the N-terminus, the 378-residue chain is Probable G-protein coupled receptor frpr-1 (378 aa).

7 consecutive transmembrane segments (helical) span residues 47-67 (LVVI…GNAL), 85-105 (LFAL…LFFL), 120-140 (AVLS…SVFI), 180-200 (VIVC…YNSP), 243-263 (TIVM…AIVI), 277-297 (IITL…PLTV), and 315-337 (SNLM…GSNF).

Belongs to the G-protein coupled receptor 1 family.

The protein resides in the cell membrane. The sequence is that of Probable G-protein coupled receptor frpr-1 from Caenorhabditis elegans.